The sequence spans 598 residues: Nitrate/nitrite sensor protein NarX (598 aa).

The Cytoplasmic segment spans residues 1–14 (MLKRCLSPLTLVNQ). The chain crosses the membrane as a helical span at residues 15–37 (VALIVLLSTAIGLAGMAVSGWLV). The Periplasmic segment spans residues 38-151 (QGVQGSAHAI…DRTTEMRIET (114 aa)). A helical transmembrane segment spans residues 152–174 (VVLVHRVMAVFMALLLVFTIIWL). Residues 175 to 598 (RARLLQPWRQ…FTDVQGDTHE (424 aa)) are Cytoplasmic-facing. Residues 176–228 (ARLLQPWRQLLAMASAVSHRDFTQRANISGRNEMAMLGTALNNMSAELAESYA) form the HAMP domain. The 195-residue stretch at 393–587 (TIARELHDSI…EVVVTFIPEK (195 aa)) folds into the Histidine kinase domain. H399 bears the Phosphohistidine; by autocatalysis mark.

It localises to the cell inner membrane. It carries out the reaction ATP + protein L-histidine = ADP + protein N-phospho-L-histidine.. Its function is as follows. Acts as a sensor for nitrate/nitrite and transduces signal of nitrate availability to the NarL protein and of both nitrate/nitrite to the NarP protein. NarX probably activates NarL and NarP by phosphorylation in the presence of nitrate. NarX also plays a negative role in controlling NarL activity, probably through dephosphorylation in the absence of nitrate. In Escherichia coli O157:H7, this protein is Nitrate/nitrite sensor protein NarX (narX).